The chain runs to 117 residues: Large ribosomal subunit protein uL18 (117 aa).

This sequence belongs to the universal ribosomal protein uL18 family. Part of the 50S ribosomal subunit; part of the 5S rRNA/L5/L18/L25 subcomplex. Contacts the 5S and 23S rRNAs.

This is one of the proteins that bind and probably mediate the attachment of the 5S RNA into the large ribosomal subunit, where it forms part of the central protuberance. This chain is Large ribosomal subunit protein uL18, found in Thioalkalivibrio sulfidiphilus (strain HL-EbGR7).